The sequence spans 857 residues: Glucans biosynthesis glucosyltransferase H (857 aa).

The next 6 helical transmembrane spans lie at isoleucine 142–leucine 162, isoleucine 196–methionine 216, valine 515–leucine 535, leucine 572–tryptophan 592, threonine 606–phenylalanine 626, and phenylalanine 682–isoleucine 702.

This sequence belongs to the glycosyltransferase 2 family. OpgH subfamily.

It is found in the cell inner membrane. The protein operates within glycan metabolism; osmoregulated periplasmic glucan (OPG) biosynthesis. Its function is as follows. Involved in the biosynthesis of osmoregulated periplasmic glucans (OPGs). This chain is Glucans biosynthesis glucosyltransferase H, found in Pseudomonas putida (strain W619).